We begin with the raw amino-acid sequence, 264 residues long: tRNA (guanine-N(1)-)-methyltransferase (264 aa).

S-adenosyl-L-methionine-binding positions include glycine 125 and 145-150; that span reads LGDFVL.

This sequence belongs to the RNA methyltransferase TrmD family. Homodimer.

Its subcellular location is the cytoplasm. The catalysed reaction is guanosine(37) in tRNA + S-adenosyl-L-methionine = N(1)-methylguanosine(37) in tRNA + S-adenosyl-L-homocysteine + H(+). Its function is as follows. Specifically methylates guanosine-37 in various tRNAs. This is tRNA (guanine-N(1)-)-methyltransferase from Burkholderia ambifaria (strain ATCC BAA-244 / DSM 16087 / CCUG 44356 / LMG 19182 / AMMD) (Burkholderia cepacia (strain AMMD)).